Reading from the N-terminus, the 1342-residue chain is DNA-directed RNA polymerase subunit beta (1342 aa).

The protein belongs to the RNA polymerase beta chain family. The RNAP catalytic core consists of 2 alpha, 1 beta, 1 beta' and 1 omega subunit. When a sigma factor is associated with the core the holoenzyme is formed, which can initiate transcription.

The catalysed reaction is RNA(n) + a ribonucleoside 5'-triphosphate = RNA(n+1) + diphosphate. DNA-dependent RNA polymerase catalyzes the transcription of DNA into RNA using the four ribonucleoside triphosphates as substrates. The chain is DNA-directed RNA polymerase subunit beta from Actinobacillus pleuropneumoniae serotype 3 (strain JL03).